Consider the following 29-residue polypeptide: U20-ctenitoxin-Co1a (29 aa).

Disulfide bonds link C3–C16 and C10–C21.

Expressed by the venom gland.

Its subcellular location is the secreted. The protein is U20-ctenitoxin-Co1a of Ctenus ornatus (Brazilian spider).